Here is a 686-residue protein sequence, read N- to C-terminus: Pentatricopeptide repeat-containing protein At4g08210 (686 aa).

PPR repeat units follow at residues 4–38 (DLKLIAAGLRHCGKVQAFKRGESIQAHVIKQGISQ), 39–69 (NVFIANNVISMYVDFRLLSDAHKVFDEMSER), 70–104 (NIVTWTTMVSGYTSDGKPNKAIELYRRMLDSEEEA), 106–140 (NEFMYSAVLKACGLVGDIQLGILVYERIGKENLRG), 141–171 (DVVLMNSVVDMYVKNGRLIEANSSFKEILRP), 172–206 (SSTSWNTLISGYCKAGLMDEAVTLFHRMPQPNVVS), 207–236 (WNCLISGFVDKGSPRALEFLVRMQREGLVL), 237–271 (DGFALPCGLKACSFGGLLTMGKQLHCCVVKSGLES), 272–302 (SPFAISALIDMYSNCGSLIYAADVFHQEKLA), 306–340 (SVAVWNSMLSGFLINEENEAALWLLLQIYQSDLCF), 341–375 (DSYTLSGALKICINYVNLRLGLQVHSLVVVSGYEL), 376–406 (DYIVGSILVDLHANVGNIQDAHKLFHRLPNK), 407–441 (DIIAFSGLIRGCVKSGFNSLAFYLFRELIKLGLDA), 442–476 (DQFIVSNILKVCSSLASLGWGKQIHGLCIKKGYES), 477–507 (EPVTATALVDMYVKCGEIDNGVVLFDGMLER), 508–542 (DVVSWTGIIVGFGQNGRVEEAFRYFHKMINIGIEP), 543–573 (NKVTFLGLLSACRHSGLLEEARSTLETMKSE), and 579–609 (YLEHYYCVVDLLGQAGLFQEANELINKMPLE). Positions 614–686 (IWTSLLTACG…AKESGMSWII (73 aa)) are type E motif; degenerate.

Belongs to the PPR family. PCMP-E subfamily.

The sequence is that of Pentatricopeptide repeat-containing protein At4g08210 (PCMP-E100) from Arabidopsis thaliana (Mouse-ear cress).